We begin with the raw amino-acid sequence, 207 residues long: Casparian strip membrane protein 1 (207 aa).

Polar residues predominate over residues 1–12 (MEADSTTINVTE). Residues 1 to 20 (MEADSTTINVTETPKERKGK) form a disordered region. The Cytoplasmic segment spans residues 1–48 (MEADSTTINVTETPKERKGKAPLLAAPPASSGVKRVLQKAPKGGYKRG). A helical transmembrane segment spans residues 49-69 (LAVFDVVLRLAGIATALGAAI). Over 70 to 98 (AMGSTDQTLPFFTQFFQFKAEFDDLPAFT) the chain is Extracellular. Residues 99 to 119 (FFVIANAITAAYLALTIPISI) form a helical membrane-spanning segment. Topologically, residues 120–131 (VCIIRPHLVAPR) are cytoplasmic. Residues 132–152 (VLLIFLDTVMVALTTAAAGGT) traverse the membrane as a helical segment. The Extracellular portion of the chain corresponds to 153–184 (ASIVYLAHNGNSDANWPAICQQFNDXCQKVSG). A helical transmembrane segment spans residues 185 to 205 (AVVASFLTVVVLMLLIVLSAF). Residues 206-207 (AL) lie on the Cytoplasmic side of the membrane.

It belongs to the Casparian strip membrane proteins (CASP) family. As to quaternary structure, homodimer and heterodimers.

It is found in the cell membrane. Regulates membrane-cell wall junctions and localized cell wall deposition. Required for establishment of the Casparian strip membrane domain (CSD) and the subsequent formation of Casparian strips, a cell wall modification of the root endodermis that determines an apoplastic barrier between the intraorganismal apoplasm and the extraorganismal apoplasm and prevents lateral diffusion. This Cynara cardunculus var. scolymus (Globe artichoke) protein is Casparian strip membrane protein 1.